The sequence spans 391 residues: Phosphoglycerate kinase (391 aa).

Residues 21–23 (DLN), Arg-36, 59–62 (HLGR), Arg-113, and Arg-146 contribute to the substrate site. Residues Lys-197, Glu-319, and 345-348 (GGDT) each bind ATP.

This sequence belongs to the phosphoglycerate kinase family. As to quaternary structure, monomer.

Its subcellular location is the cytoplasm. It carries out the reaction (2R)-3-phosphoglycerate + ATP = (2R)-3-phospho-glyceroyl phosphate + ADP. It functions in the pathway carbohydrate degradation; glycolysis; pyruvate from D-glyceraldehyde 3-phosphate: step 2/5. The sequence is that of Phosphoglycerate kinase from Xylella fastidiosa (strain Temecula1 / ATCC 700964).